The sequence spans 276 residues: Large ribosomal subunit protein uL2 (276 aa).

Residues 226-276 (MNSVDHPHGGGEGKTSGGRHPVSPWGTPTKGYKTRSNKRTDKLILRHRNKG) form a disordered region.

It belongs to the universal ribosomal protein uL2 family. In terms of assembly, part of the 50S ribosomal subunit. Forms a bridge to the 30S subunit in the 70S ribosome.

Functionally, one of the primary rRNA binding proteins. Required for association of the 30S and 50S subunits to form the 70S ribosome, for tRNA binding and peptide bond formation. It has been suggested to have peptidyltransferase activity; this is somewhat controversial. Makes several contacts with the 16S rRNA in the 70S ribosome. The polypeptide is Large ribosomal subunit protein uL2 (Vesicomyosocius okutanii subsp. Calyptogena okutanii (strain HA)).